Consider the following 92-residue polypeptide: RNA-binding protein Hfq (92 aa).

A Sm domain is found at 10-71 (DLFLNQLRKE…ISSIMPSKPI (62 aa)). The disordered stretch occupies residues 73–92 (YMAQAQNNQQASQQSNNNQG). The segment covering 75 to 92 (AQAQNNQQASQQSNNNQG) has biased composition (low complexity).

Belongs to the Hfq family. As to quaternary structure, homohexamer.

Functionally, RNA chaperone that binds small regulatory RNA (sRNAs) and mRNAs to facilitate mRNA translational regulation in response to envelope stress, environmental stress and changes in metabolite concentrations. Also binds with high specificity to tRNAs. The sequence is that of RNA-binding protein Hfq from Caldicellulosiruptor bescii (strain ATCC BAA-1888 / DSM 6725 / KCTC 15123 / Z-1320) (Anaerocellum thermophilum).